The primary structure comprises 132 residues: Large ribosomal subunit protein bL17 (132 aa).

It belongs to the bacterial ribosomal protein bL17 family. Part of the 50S ribosomal subunit. Contacts protein L32.

This Albidiferax ferrireducens (strain ATCC BAA-621 / DSM 15236 / T118) (Rhodoferax ferrireducens) protein is Large ribosomal subunit protein bL17.